The sequence spans 198 residues: Carnitine operon protein CaiE (198 aa).

Residues 179–198 (VEENRPRLKGTTDVKPKSAQ) are disordered. Residues 180–198 (EENRPRLKGTTDVKPKSAQ) are compositionally biased toward basic and acidic residues.

This sequence belongs to the transferase hexapeptide repeat family.

The protein operates within amine and polyamine metabolism; carnitine metabolism. In terms of biological role, overproduction of CaiE stimulates the activity of CaiB and CaiD. This Salmonella enteritidis PT4 (strain P125109) protein is Carnitine operon protein CaiE.